The following is a 368-amino-acid chain: Serine/threonine-protein phosphatase PP2A-like PPG1 (368 aa).

Aspartate 50, histidine 52, aspartate 78, and asparagine 110 together coordinate Mn(2+). Residue histidine 111 is the Proton donor of the active site. Residues histidine 161 and histidine 247 each contribute to the Mn(2+) site.

Belongs to the PPP phosphatase family. PP-2A subfamily. Inactivated in a complex with phosphatase methylesterase PPE1 (PP2Ai). Interacts with phosphatase 2A activator RRD1, which can reactivate PP2Ai by dissociating the catalytic subunit from the complex. Interacts with TAP42. Requires Mn(2+) as cofactor. Post-translationally, reversibly methyl esterified on Leu-368 by leucine carboxyl methyltransferase 1 (PPM1) and protein phosphatase methylesterase 1 (PPE1). Carboxyl methylation influences the affinity of the catalytic subunit for the different regulatory subunits, thereby modulating the PP2A holoenzyme's substrate specificity, enzyme activity and cellular localization.

It carries out the reaction O-phospho-L-seryl-[protein] + H2O = L-seryl-[protein] + phosphate. The catalysed reaction is O-phospho-L-threonyl-[protein] + H2O = L-threonyl-[protein] + phosphate. Functionally, involved in glycogen accumulation. The polypeptide is Serine/threonine-protein phosphatase PP2A-like PPG1 (PPG1) (Saccharomyces cerevisiae (strain ATCC 204508 / S288c) (Baker's yeast)).